Consider the following 1847-residue polypeptide: Cilia- and flagella-associated protein 65 (1847 aa).

A helical membrane pass occupies residues 112 to 132; sequence FFTIIPQPIFLSPGITLTLPI. Residues 805-914 form the MSP domain; that stretch reads DLKLDTHKSI…VHYRIRLVGM (110 aa). Positions 1457 to 1483 form a coiled coil; that stretch reads QRELMRQYHKELQEWNEEKARQEVEFT. Residues 1668-1721 form a disordered region; sequence YEGRKSKEQEEDLFGKMPGGQEDDEEEEEDEEEAEEEEEEIEEEMSKDEEDIDK. Residues 1688 to 1720 show a composition bias toward acidic residues; it reads QEDDEEEEEDEEEAEEEEEEIEEEMSKDEEDID.

It belongs to the CFAP65 family. In terms of assembly, interacts with CFAP47. Predominantly expressed in testis. Highly expressed in round and elongating spermatids. Expressed also in certain ciliated organs, such as the brain, lung and kidney.

It is found in the cell projection. The protein resides in the cilium. Its subcellular location is the flagellum membrane. It localises to the cytoplasmic vesicle. The protein localises to the secretory vesicle. It is found in the acrosome membrane. The protein resides in the cytoplasm. In terms of biological role, plays a role in flagellar formation and sperm motility. The chain is Cilia- and flagella-associated protein 65 from Mus musculus (Mouse).